Consider the following 86-residue polypeptide: Omega-theraphotoxin-Hhn1a 2 (86 aa).

Positions Met-1–Ala-21 are cleaved as a signal peptide. The propeptide occupies Ser-22 to Arg-50. Disulfide bonds link Cys-52–Cys-66, Cys-59–Cys-71, and Cys-65–Cys-78.

It belongs to the neurotoxin 10 (Hwtx-1) family. 17 (Hntx-9) subfamily. In terms of tissue distribution, expressed by the venom gland.

The protein resides in the secreted. In terms of biological role, ion channel inhibitor. The protein is Omega-theraphotoxin-Hhn1a 2 of Cyriopagopus hainanus (Chinese bird spider).